The following is a 341-amino-acid chain: Radial spoke head 14 homolog (341 aa).

ARM repeat units follow at residues 16-55 (PTKA…DLMH), 57-96 (PEYV…IMAT), 99-138 (VGRV…LAQL), 139-178 (PKGA…LCLQ), 180-217 (DATE…AISI), 219-258 (LDGK…HATV), 260-300 (TEGK…MLAE), and 302-339 (PEGR…VIEW).

Belongs to the flagellar radial spoke RSP14 family. As to quaternary structure, component of the axonemal radial spoke complex 1 (RS1), at least composed of spoke head proteins RSPH1, RSPH3, RSPH9 and the cilia-specific component RSPH4A or sperm-specific component RSPH6A, spoke stalk proteins RSPH14, DNAJB13, DYDC1, ROPN1L and NME5, and the anchor protein IQUB.

The protein resides in the cytoplasm. It localises to the cytoskeleton. Its subcellular location is the flagellum axoneme. In terms of biological role, functions as part of axonemal radial spoke complexes that play an important part in the motility of sperm and cilia. The protein is Radial spoke head 14 homolog of Mus musculus (Mouse).